The primary structure comprises 152 residues: Transcriptional regulator MraZ (152 aa).

2 consecutive SpoVT-AbrB domains span residues 5-52 (ASSL…PLAQ) and 81-124 (ATEY…DEAR).

It belongs to the MraZ family. As to quaternary structure, forms oligomers.

It localises to the cytoplasm. The protein resides in the nucleoid. In Pseudoalteromonas translucida (strain TAC 125), this protein is Transcriptional regulator MraZ.